Here is a 561-residue protein sequence, read N- to C-terminus: Liver carboxylesterase 1F (561 aa).

Residues 1-18 (MCLSFLFLVSLATCVVYG) form the signal peptide. Asparagine 79 carries N-linked (GlcNAc...) asparagine glycosylation. The cysteines at positions 87 and 116 are disulfide-linked. Catalysis depends on serine 221, which acts as the Acyl-ester intermediate. An intrachain disulfide couples cysteine 273 to cysteine 284. Catalysis depends on charge relay system residues glutamate 353 and histidine 466. Positions 558–561 (HNEL) match the Prevents secretion from ER motif.

The protein belongs to the type-B carboxylesterase/lipase family. As to expression, expressed in liver and kidney.

The protein resides in the lipid droplet. It is found in the cytoplasm. It localises to the cytosol. The protein localises to the endoplasmic reticulum. Its subcellular location is the microsome. The catalysed reaction is a carboxylic ester + H2O = an alcohol + a carboxylate + H(+). It carries out the reaction all-trans-retinyl hexadecanoate + H2O = all-trans-retinol + hexadecanoate + H(+). Functionally, involved in the detoxification of xenobiotics and in the activation of ester and amide prodrugs. Hydrolyzes retinyl esters. Hydrolyzes p-nitrophenyl butyrate (PNPB), triacylglycerol and monoacylglycerol. Shows higher activity against PNPB, a short-chain fatty acid ester, than against triolein, a long-chain fatty acid ester. Shows no detectable activity against diacylglycerol, cholesterol ester or phospholipids. May play a role in adipocyte lipolysis. This is Liver carboxylesterase 1F from Rattus norvegicus (Rat).